Reading from the N-terminus, the 345-residue chain is L-threonine 3-dehydrogenase (345 aa).

A Zn(2+)-binding site is contributed by Cys-42. Residues Thr-44 and His-47 each act as charge relay system in the active site. Zn(2+) contacts are provided by His-67, Glu-68, Cys-97, Cys-100, Cys-103, and Cys-111. Residues Ile-179, Asp-199, Arg-204, 266-268 (LGI), and 290-291 (IY) each bind NAD(+).

It belongs to the zinc-containing alcohol dehydrogenase family. As to quaternary structure, homotetramer. The cofactor is Zn(2+).

The protein localises to the cytoplasm. The catalysed reaction is L-threonine + NAD(+) = (2S)-2-amino-3-oxobutanoate + NADH + H(+). It functions in the pathway amino-acid degradation; L-threonine degradation via oxydo-reductase pathway; glycine from L-threonine: step 1/2. Its function is as follows. Catalyzes the NAD(+)-dependent oxidation of L-threonine to 2-amino-3-ketobutyrate. The protein is L-threonine 3-dehydrogenase of Rhizobium etli (strain ATCC 51251 / DSM 11541 / JCM 21823 / NBRC 15573 / CFN 42).